A 103-amino-acid polypeptide reads, in one-letter code: Nucleoid-associated protein SUN_2278 (103 aa).

It belongs to the YbaB/EbfC family. In terms of assembly, homodimer.

It localises to the cytoplasm. The protein localises to the nucleoid. In terms of biological role, binds to DNA and alters its conformation. May be involved in regulation of gene expression, nucleoid organization and DNA protection. This chain is Nucleoid-associated protein SUN_2278, found in Sulfurovum sp. (strain NBC37-1).